A 66-amino-acid polypeptide reads, in one-letter code: Prokaryotic ubiquitin-like protein Pup (66 aa).

The segment covering M1–S10 has biased composition (low complexity). A disordered region spans residues M1–D39. The segment at V23–F60 is ARC ATPase binding. Q66 is modified (deamidated glutamine). Residue Q66 forms an Isoglutamyl lysine isopeptide (Gln-Lys) (interchain with K-? in acceptor proteins) linkage.

The protein belongs to the prokaryotic ubiquitin-like protein family. In terms of assembly, strongly interacts with the proteasome-associated ATPase ARC through a hydrophobic interface; the interacting region of Pup lies in its C-terminal half. There is one Pup binding site per ARC hexamer ring. Post-translationally, is modified by deamidation of its C-terminal glutamine to glutamate by the deamidase Dop, a prerequisite to the subsequent pupylation process.

It functions in the pathway protein degradation; proteasomal Pup-dependent pathway. In terms of biological role, protein modifier that is covalently attached to lysine residues of substrate proteins, thereby targeting them for proteasomal degradation. The tagging system is termed pupylation. This is Prokaryotic ubiquitin-like protein Pup from Renibacterium salmoninarum (strain ATCC 33209 / DSM 20767 / JCM 11484 / NBRC 15589 / NCIMB 2235).